A 176-amino-acid polypeptide reads, in one-letter code: Inner membrane-spanning protein YciB (176 aa).

5 consecutive transmembrane segments (helical) span residues 24 to 44, 49 to 69, 76 to 96, 119 to 139, and 149 to 169; these read TATA…AFRH, PMLW…LVLH, WKPT…QLAF, LNVV…FVAY, and FKLF…SLWL.

This sequence belongs to the YciB family.

It localises to the cell inner membrane. Functionally, plays a role in cell envelope biogenesis, maintenance of cell envelope integrity and membrane homeostasis. In Paraburkholderia xenovorans (strain LB400), this protein is Inner membrane-spanning protein YciB.